The sequence spans 330 residues: Ketol-acid reductoisomerase (NADP(+)) (330 aa).

One can recognise a KARI N-terminal Rossmann domain in the interval 3–184 (LPVYYDKDID…GGGRMGVLET (182 aa)). NADP(+) is bound by residues 26–29 (YGAQ), serine 52, and serine 54. Residue histidine 109 is part of the active site. Glycine 135 contacts NADP(+). One can recognise a KARI C-terminal knotted domain in the interval 185–329 (SFKEECESDL…EILRAPFNHK (145 aa)). Mg(2+) contacts are provided by aspartate 193, glutamate 197, glutamate 229, and glutamate 233. Serine 254 is a binding site for substrate.

Belongs to the ketol-acid reductoisomerase family. It depends on Mg(2+) as a cofactor.

It carries out the reaction (2R)-2,3-dihydroxy-3-methylbutanoate + NADP(+) = (2S)-2-acetolactate + NADPH + H(+). The catalysed reaction is (2R,3R)-2,3-dihydroxy-3-methylpentanoate + NADP(+) = (S)-2-ethyl-2-hydroxy-3-oxobutanoate + NADPH + H(+). Its pathway is amino-acid biosynthesis; L-isoleucine biosynthesis; L-isoleucine from 2-oxobutanoate: step 2/4. The protein operates within amino-acid biosynthesis; L-valine biosynthesis; L-valine from pyruvate: step 2/4. Involved in the biosynthesis of branched-chain amino acids (BCAA). Catalyzes an alkyl-migration followed by a ketol-acid reduction of (S)-2-acetolactate (S2AL) to yield (R)-2,3-dihydroxy-isovalerate. In the isomerase reaction, S2AL is rearranged via a Mg-dependent methyl migration to produce 3-hydroxy-3-methyl-2-ketobutyrate (HMKB). In the reductase reaction, this 2-ketoacid undergoes a metal-dependent reduction by NADPH to yield (R)-2,3-dihydroxy-isovalerate. The chain is Ketol-acid reductoisomerase (NADP(+)) from Helicobacter pylori (strain Shi470).